We begin with the raw amino-acid sequence, 85 residues long: UPF0386 protein MXAN_1729 (85 aa).

The protein belongs to the UPF0386 family.

This chain is UPF0386 protein MXAN_1729, found in Myxococcus xanthus (strain DK1622).